Here is a 275-residue protein sequence, read N- to C-terminus: Bis(5'-nucleosyl)-tetraphosphatase, symmetrical (275 aa).

This sequence belongs to the Ap4A hydrolase family.

The enzyme catalyses P(1),P(4)-bis(5'-adenosyl) tetraphosphate + H2O = 2 ADP + 2 H(+). In terms of biological role, hydrolyzes diadenosine 5',5'''-P1,P4-tetraphosphate to yield ADP. This is Bis(5'-nucleosyl)-tetraphosphatase, symmetrical (apaH) from Pasteurella multocida (strain Pm70).